A 524-amino-acid chain; its full sequence is Maturase K (524 aa).

Belongs to the intron maturase 2 family. MatK subfamily.

The protein localises to the plastid. Its subcellular location is the chloroplast. Its function is as follows. Usually encoded in the trnK tRNA gene intron. Probably assists in splicing its own and other chloroplast group II introns. This is Maturase K from Welwitschia mirabilis (Tree tumbo).